Consider the following 181-residue polypeptide: Peptide deformylase (181 aa).

Residues Cys-104 and His-146 each contribute to the Fe cation site. Glu-147 is a catalytic residue. Residue His-150 participates in Fe cation binding.

The protein belongs to the polypeptide deformylase family. Fe(2+) is required as a cofactor.

The enzyme catalyses N-terminal N-formyl-L-methionyl-[peptide] + H2O = N-terminal L-methionyl-[peptide] + formate. Functionally, removes the formyl group from the N-terminal Met of newly synthesized proteins. Requires at least a dipeptide for an efficient rate of reaction. N-terminal L-methionine is a prerequisite for activity but the enzyme has broad specificity at other positions. This Helicobacter hepaticus (strain ATCC 51449 / 3B1) protein is Peptide deformylase.